The sequence spans 251 residues: E3 ubiquitin-protein ligase MARCHF3 (251 aa).

The segment at 61–121 adopts an RING-CH-type zinc-finger fold; that stretch reads QSFNDRPMCR…ELCHFRFSVE (61 aa). Residues cysteine 69, cysteine 72, cysteine 85, cysteine 87, histidine 95, cysteine 98, cysteine 111, and cysteine 114 each coordinate Zn(2+). Helical transmembrane passes span 143-163 and 180-200; these read LFGDMVCFLFITPLATISGWL and AVGLIALTVALFTIYLFWTLV.

The protein localises to the cytoplasmic vesicle membrane. Its subcellular location is the early endosome membrane. It catalyses the reaction S-ubiquitinyl-[E2 ubiquitin-conjugating enzyme]-L-cysteine + [acceptor protein]-L-lysine = [E2 ubiquitin-conjugating enzyme]-L-cysteine + N(6)-ubiquitinyl-[acceptor protein]-L-lysine.. The protein operates within protein modification; protein ubiquitination. In terms of biological role, E3 ubiquitin-protein ligase which may be involved in endosomal trafficking. E3 ubiquitin ligases accept ubiquitin from an E2 ubiquitin-conjugating enzyme in the form of a thioester and then directly transfer the ubiquitin to targeted substrates. This Xenopus tropicalis (Western clawed frog) protein is E3 ubiquitin-protein ligase MARCHF3 (marchf3).